Here is a 744-residue protein sequence, read N- to C-terminus: MAVPPGPPQLLQVLLTISLGSIRLIQAGAYYGIKPLPPQIPPQMPPQIPQYQPLGQQVPHMPLAKDGLTMGKEMPHAQYGKEYPHLPQYMKEVQPVPRMGKEAVPKKGKEIPLASLRGEQGPRGEPGPRGPPGPPGLPGQGIPGIKGKPGPQGYPGVGKPGMPGMPGKPGAMGMPGAKGEIGPKGEIGPMGIPGPQGPPGPHGLPGIGKPGGPGLPGQPGAKGDRGPKGPPGPPGLQGPKGEKGFGMPGLPGLKGPPGMHGPPGPVGLPGVGKPGVTGFPGPQGPLGKPGPPGEPGPQGPIGVPGVQGPPGLPGVGKPGQDGIPGQPGFPGGKGEQGLPGLPGPPGLPGVGKPGFPGPKGDRGIGGVPGALGPRGEKGPVGAPGMGGPPGEPGLPGIPGPMGPPGAIGFPGPKGEGGIVGPQGPPGPKGEPGLQGFPGKPGFLGEVGPPGIRGLPGPIGPKGEAGHKGLPGLPGVPGLLGPKGEPGIPGDQGLQGPPGIPGITGPSGPIGPPGIPGPKGEPGLPGPPGFPGVGKPGVAGLHGPPGKPGALGPQGQPGLPGPPGPPGPPGPPAVMPPTPAPQGEYLPDMGLGIDGVKTPHAYAAKKGKNGGPAYEMPAFTAELTAPFPPVGAPIKFDRLLYNGRQNYNPQTGIFTCEVPGVYYFAYHVHCKGGNVWVALFKNNEPVMYTYDEYKKGFLDQASGSAVLLLRPGDRVFLQMPSEQAAGLYAGQYVHSSFSGYLLYPM.

An N-terminal signal peptide occupies residues 1–27; it reads MAVPPGPPQLLQVLLTISLGSIRLIQA. The tract at residues 29–117 is nonhelical region (NC2); sequence AYYGIKPLPP…GKEIPLASLR (89 aa). The segment covering 101–110 has biased composition (basic and acidic residues); that stretch reads KEAVPKKGKE. Disordered stretches follow at residues 101 to 435 and 478 to 584; these read KEAV…GLQG and LLGP…QGEY. Residues 118–571 form a triple-helical region region; it reads GEQGPRGEPG…PGPPGPPGPP (454 aa). The span at 128–137 shows a compositional bias: pro residues; the sequence is PRGPPGPPGL. Low complexity predominate over residues 168–190; the sequence is KPGAMGMPGAKGEIGPKGEIGPM. Residues 203–217 are compositionally biased toward gly residues; sequence GLPGIGKPGGPGLPG. Over residues 288-298 the composition is skewed to pro residues; it reads KPGPPGEPGPQ. A compositionally biased stretch (gly residues) spans 328 to 337; the sequence is GFPGGKGEQG. A compositionally biased stretch (pro residues) spans 389 to 403; the sequence is PGEPGLPGIPGPMGP. Gly residues predominate over residues 411-420; the sequence is GPKGEGGIVG. 2 stretches are compositionally biased toward low complexity: residues 478-506 and 540-556; these read LLGP…TGPS and LHGP…QGQP. Residues 558–579 show a composition bias toward pro residues; it reads LPGPPGPPGPPGPPAVMPPTPA. Residues 572–744 are nonhelical region (NC1); sequence AVMPPTPAPQ…SFSGYLLYPM (173 aa). The C1q domain occupies 611 to 744; it reads PAYEMPAFTA…SFSGYLLYPM (134 aa).

As to quaternary structure, homotrimers, or heterotrimers in association with alpha 2(VIII) type collagens. Four homotrimers can form a tetrahedron stabilized by central interacting C-terminal NC1 trimers. In terms of processing, prolines at the third position of the tripeptide repeating unit (G-X-Y) are hydroxylated in some or all of the chains. Post-translationally, proteolytically cleaved by neutrophil elastase, in vitro. Proteolytic processing produces the C-terminal NC1 domain fragment, vastatin.

The protein localises to the secreted. Its subcellular location is the extracellular space. It is found in the extracellular matrix. It localises to the basement membrane. Macromolecular component of the subendothelium. Major component of the Descemet's membrane (basement membrane) of corneal endothelial cells. Also a component of the endothelia of blood vessels. Necessary for migration and proliferation of vascular smooth muscle cells and thus, has a potential role in the maintenance of vessel wall integrity and structure, in particular in atherogenesis. Functionally, vastatin, the C-terminal fragment comprising the NC1 domain, inhibits aortic endothelial cell proliferation and causes cell apoptosis. The protein is Collagen alpha-1(VIII) chain (COL8A1) of Oryctolagus cuniculus (Rabbit).